We begin with the raw amino-acid sequence, 273 residues long: TIP41-like protein (273 aa).

The protein belongs to the TIP41 family.

Its subcellular location is the cytoplasm. Functionally, may be a regulator of serine/threonine-protein phosphatases 2A (PP2A) and 4 (PP4). This chain is TIP41-like protein (tiprl), found in Xenopus tropicalis (Western clawed frog).